The following is a 477-amino-acid chain: MQILFVASEVGPWSKTGGLGDVAGALPQALAERGNEVAVVTPRHGSIDPHAAGLQPVRTALHVRGEPVALWVKRGPAPVYFVEHPHLFGSRRGLYGEGGRDHGDNAERFAFLTRAALALPAALGLRPRILHLNDWQCGLGPWLLRHEHARDPALAGARTVFTIHNLAYQGLFPKQVLPALGLPWEVFRWEAMEFFDQLSFMKAGLAFADALTTVSPTYAREILTPEGGASLDALLRHRARDLHGILNGIDVHAWDPARDPHLPAHFGAGDLTGKAACKAALQREVGLPVRPEVPVAGLVTRLAEQKGIDLVAAALPALLARDVQVVLLGSGDAAYEQAFARAAREHPDRVAARIGFDEGLAHRIEAGADLFLMPSRFEPCGLNQMYSLRYGTVPVVRAVGGLADTVEDFDGFARGTGFRFSEYTPQALLTATRRALDVFRDRRAWRGLVERGMAEDNSWERSAARYEALYRTLAPGR.

Lys-15 serves as a coordination point for ADP-alpha-D-glucose.

It belongs to the glycosyltransferase 1 family. Bacterial/plant glycogen synthase subfamily.

It catalyses the reaction [(1-&gt;4)-alpha-D-glucosyl](n) + ADP-alpha-D-glucose = [(1-&gt;4)-alpha-D-glucosyl](n+1) + ADP + H(+). The protein operates within glycan biosynthesis; glycogen biosynthesis. Functionally, synthesizes alpha-1,4-glucan chains using ADP-glucose. The chain is Glycogen synthase from Anaeromyxobacter dehalogenans (strain 2CP-1 / ATCC BAA-258).